Here is a 241-residue protein sequence, read N- to C-terminus: ATP-dependent dethiobiotin synthetase BioD (241 aa).

13–18 (DIGKTV) provides a ligand contact to ATP. T17 is a binding site for Mg(2+). Residue K38 is part of the active site. S42 contributes to the substrate binding site. ATP contacts are provided by residues D55, 116 to 119 (EGSG), and 180 to 181 (NK). The Mg(2+) site is built by D55 and E116.

This sequence belongs to the dethiobiotin synthetase family. In terms of assembly, homodimer. It depends on Mg(2+) as a cofactor.

It localises to the cytoplasm. It carries out the reaction (7R,8S)-7,8-diammoniononanoate + CO2 + ATP = (4R,5S)-dethiobiotin + ADP + phosphate + 3 H(+). It functions in the pathway cofactor biosynthesis; biotin biosynthesis; biotin from 7,8-diaminononanoate: step 1/2. Functionally, catalyzes a mechanistically unusual reaction, the ATP-dependent insertion of CO2 between the N7 and N8 nitrogen atoms of 7,8-diaminopelargonic acid (DAPA, also called 7,8-diammoniononanoate) to form a ureido ring. This is ATP-dependent dethiobiotin synthetase BioD from Clostridium kluyveri (strain NBRC 12016).